The primary structure comprises 741 residues: MALAQQTRLVRVDSPLGAEVLQLQRMEGREELGRPFAYELELISENPDLPLDGLLGKPASLALELHDGSRRHFHGIVAACSQGSGNGQFASYQVTLRPWLWLLTRTSDCRIFQNQKVPDIIKQVFRDLGFSDFEDALSRSYREWEYCVQYRETSFDFVSRLMEQEGIYYWFRHEQSRHILVLSDAYGAHQSPPNYASVPYYPPTLEQRERDHFYDWHMAREVQSGSLSLNDYDFQRPGARLEVRSNIARSHAAADYPLYDYPGEYVQSQDGEQYARTRIEALQARYERVRLRGRARGLGSGHLFKLSGYPREDQNREYLVVGAEYRVVQELYETGGGGVGAQFESELDCIDAGQAYRPLPTTPLPIVRGPQTAVVVGPKGEEIWTDQYGRVKVHFHWDRHDQSNENSSCWIRVSQAWAGKNWGSMQIPRIGQEVIVSFLEGDPDRPIITGRVYNAEQTVPYELPANATQSGMKSRSSKGGTPANFNEIRMEDKKGAEQLFIHAEKNQDIEVENDETHWVGHDRTKTIDHDETVHVKHDRTETVDNNETITIGVDRTEKVGNNEKISIGANRTEDVGSNETISIGVDRTEKVGSNEKISIGANRTEDVGNDETISIGANRSESVGNNETISIGADRSESVGANETIDIGGNQSTSIGKNESRSVGQGRDTSVGKDDSLDVGKSFTLNAGDSITLVTGAASIRMKKDGSIVISGKNITIDGSGAINVKADKNVVVKGRKILQN.

Polar residues-rich tracts occupy residues 614-629 and 649-663; these read SIGA…NETI and GNQS…SRSV. Residues 614–678 form a disordered region; that stretch reads SIGANRSESV…TSVGKDDSLD (65 aa).

It belongs to the VgrG protein family.

It is found in the secreted. Its function is as follows. Part of the H1 type VI secretion system (H1-T6SS) specialized secretion system, which delivers several virulence factors in both prokaryotic and eukaryotic cells during infection. Allows the delivery of the Tse7 toxin to target cells where it exerts toxicity through its nuclease domain. This chain is Type VI secretion system spike protein VgrG1b, found in Pseudomonas aeruginosa (strain ATCC 15692 / DSM 22644 / CIP 104116 / JCM 14847 / LMG 12228 / 1C / PRS 101 / PAO1).